Here is a 132-residue protein sequence, read N- to C-terminus: Small ribosomal subunit protein uS8 (132 aa).

It belongs to the universal ribosomal protein uS8 family. As to quaternary structure, part of the 30S ribosomal subunit. Contacts proteins S5 and S12.

Its function is as follows. One of the primary rRNA binding proteins, it binds directly to 16S rRNA central domain where it helps coordinate assembly of the platform of the 30S subunit. The sequence is that of Small ribosomal subunit protein uS8 from Streptomyces avermitilis (strain ATCC 31267 / DSM 46492 / JCM 5070 / NBRC 14893 / NCIMB 12804 / NRRL 8165 / MA-4680).